The following is a 332-amino-acid chain: MNPLIFKEDCPLDLIAVGRLCVDLNANETQRPMEATRTFTKYVGGSPANIAIGATRLGLQTGFIGKVSDDQMGRFITRYLQDNNINTDQICIDRTGAVTGLAFTEIKSPEDCSILMYRDNVADLNLDPTEVSEDYIKQSKALLISGTALAKSPSREAVFLALEYARKHDVVVFFDVDYRPYTWQSEAETAVYYNLAAEKSDVIIGTREEFDMMEKLLNYEESNDQVTAERWFSHHAKIVVIKHGGDGSIAYTRDGQSHRGGIFKTKVLKTFGAGDSYASAFIYGLMQGLEIPQAMRLGGASASIVISKHSCSDAMPTRAEISAFMEIAEEIV.

It belongs to the carbohydrate kinase PfkB family.

It catalyses the reaction 5-dehydro-2-deoxy-D-gluconate + ATP = 6-phospho-5-dehydro-2-deoxy-D-gluconate + ADP + H(+). Its pathway is polyol metabolism; myo-inositol degradation into acetyl-CoA; acetyl-CoA from myo-inositol: step 5/7. Functionally, catalyzes the phosphorylation of 5-dehydro-2-deoxy-D-gluconate (2-deoxy-5-keto-D-gluconate or DKG) to 6-phospho-5-dehydro-2-deoxy-D-gluconate (DKGP). The sequence is that of 5-dehydro-2-deoxygluconokinase 2 from Bacillus cereus (strain ZK / E33L).